The following is a 648-amino-acid chain: MGKIIGIDLGTTNSCVAVMEGNQVKVIENSEGARTTPSIIAYMDDNEVLVGAPAKRQSVTNPKNTLFAVKRLIGRRFEEKEVQKDIGLMPYSIIKADNGDAWVEAHGQKLAPPQVSAEVLRKMKKTAEDYLGEPVTEAVITVPAYFNDSQRQATKDAGRIAGLEVKRIINEPTAAALAFGLDKAEKGDRKIAVYDLGGGTFDVSIIEIADVDGEKQFEVLSTNGDTFLGGEDFDQRIIDYIIGEFKKEQGVDLSKDVLALQRLKEAAEKAKIELSSSQQTEINLPYITADASGPKHLNLKITRAKLEALVEDLVERTIEPCRIAIKDAGVKVSDIDDVILVGGQTRMPKVQEKVKEFFGKEPRRDVNPDEAVAVGAAIQGQVLSGDRKDVLLLDVTPLSLGIETLGGVMTKMISKNTTIPTKHSQVYSTADDNQSAVTIKVYQGEREMAAGNKLLGEFNLEGIPPAPRGVPQIEVTFDIDANGILHVGAKDKATGKENKITIKANSGLSEAEIDQMIKDAEANAAEDHKLRELADSRNQGDALVHSTKKALSEYGDKLDAGEKEKIEAALKSLEDVLKDTSADKAAIDAKVEELGKASQKLGEKMYADMQAQAGAAGAAGAAEGAAQGGAQQAADDVVDAEFKEVKKD.

Position 200 is a phosphothreonine; by autocatalysis (T200). The segment at 612 to 631 is disordered; the sequence is QAGAAGAAGAAEGAAQGGAQ.

This sequence belongs to the heat shock protein 70 family.

Acts as a chaperone. This Burkholderia multivorans (strain ATCC 17616 / 249) protein is Chaperone protein DnaK.